A 238-amino-acid polypeptide reads, in one-letter code: Phosphoribosylaminoimidazole-succinocarboxamide synthase (238 aa).

It belongs to the SAICAR synthetase family.

The catalysed reaction is 5-amino-1-(5-phospho-D-ribosyl)imidazole-4-carboxylate + L-aspartate + ATP = (2S)-2-[5-amino-1-(5-phospho-beta-D-ribosyl)imidazole-4-carboxamido]succinate + ADP + phosphate + 2 H(+). It participates in purine metabolism; IMP biosynthesis via de novo pathway; 5-amino-1-(5-phospho-D-ribosyl)imidazole-4-carboxamide from 5-amino-1-(5-phospho-D-ribosyl)imidazole-4-carboxylate: step 1/2. The sequence is that of Phosphoribosylaminoimidazole-succinocarboxamide synthase from Alcanivorax borkumensis (strain ATCC 700651 / DSM 11573 / NCIMB 13689 / SK2).